The sequence spans 389 residues: Lipid-A-disaccharide synthase (389 aa).

Belongs to the LpxB family.

The enzyme catalyses a lipid X + a UDP-2-N,3-O-bis[(3R)-3-hydroxyacyl]-alpha-D-glucosamine = a lipid A disaccharide + UDP + H(+). The protein operates within bacterial outer membrane biogenesis; LPS lipid A biosynthesis. Its function is as follows. Condensation of UDP-2,3-diacylglucosamine and 2,3-diacylglucosamine-1-phosphate to form lipid A disaccharide, a precursor of lipid A, a phosphorylated glycolipid that anchors the lipopolysaccharide to the outer membrane of the cell. The chain is Lipid-A-disaccharide synthase from Histophilus somni (strain 2336) (Haemophilus somnus).